The chain runs to 1463 residues: DNA-directed RNA polymerase subunit beta'' (1463 aa).

Residues Cys239, Cys312, Cys319, and Cys322 each contribute to the Zn(2+) site. Disordered regions lie at residues 836–869 and 987–1007; these read TFTG…ETRM and TNRS…AQAR. A compositionally biased stretch (polar residues) spans 860 to 869; sequence AANSSHETRM. Basic residues predominate over residues 987–996; sequence TNRSKTRRNA. Polar residues predominate over residues 997 to 1007; it reads SGKTQVKAQAR.

The protein belongs to the RNA polymerase beta' chain family. RpoC2 subfamily. In terms of assembly, in plastids the minimal PEP RNA polymerase catalytic core is composed of four subunits: alpha, beta, beta', and beta''. When a (nuclear-encoded) sigma factor is associated with the core the holoenzyme is formed, which can initiate transcription. Zn(2+) serves as cofactor.

It is found in the plastid. Its subcellular location is the chloroplast. It catalyses the reaction RNA(n) + a ribonucleoside 5'-triphosphate = RNA(n+1) + diphosphate. Its function is as follows. DNA-dependent RNA polymerase catalyzes the transcription of DNA into RNA using the four ribonucleoside triphosphates as substrates. The chain is DNA-directed RNA polymerase subunit beta'' from Nephroselmis olivacea (Green alga).